The primary structure comprises 149 residues: Large ribosomal subunit protein bL9 (149 aa).

This sequence belongs to the bacterial ribosomal protein bL9 family.

Its function is as follows. Binds to the 23S rRNA. This Mannheimia succiniciproducens (strain KCTC 0769BP / MBEL55E) protein is Large ribosomal subunit protein bL9.